Here is a 402-residue protein sequence, read N- to C-terminus: MGIKSLDDLLAEGVSGRGVLVRSDLNVPLDGGSITDPGRIIASVPTLKALSDAGAKVVVTAHLGRPKGEPDPKFSLAPVGAALGEKLGRHVQLAGDVVGSDALARAEGLTDGDILLLENIRFDGRETSKDDAERLKLAKALVELVGDDGAFVSDGFGVVHRKQASVYDVATLLPHYAGTLVDTEVKVLAQLTESTERPYAVVLGGSKVSDKLAVIENLATKADSLIIGGGMCFTFLAAQGLSVGSSLLEESMIDTCRTLLDDYGDVLHLPVDIVVAEKFSADSEPQTVAADKIPDDKMGLDIGPESVRRFSALLSNAKTIFWNGPMGVFEFPAFAAGTKGVAEAIIGATGKGAFSVVGGGDSAAAVRQLGLPEDGFSHISTGGGASLEYLEGKELPGIEVLN.

Substrate contacts are provided by residues 24-26 (DLN), Arg39, 62-65 (HLGR), Arg121, and Arg161. Residues Lys211, Gly299, Glu330, and 359–362 (GGDS) contribute to the ATP site.

It belongs to the phosphoglycerate kinase family. Monomer.

It is found in the cytoplasm. The catalysed reaction is (2R)-3-phosphoglycerate + ATP = (2R)-3-phospho-glyceroyl phosphate + ADP. The protein operates within carbohydrate degradation; glycolysis; pyruvate from D-glyceraldehyde 3-phosphate: step 2/5. This chain is Phosphoglycerate kinase, found in Mycolicibacterium gilvum (strain PYR-GCK) (Mycobacterium gilvum (strain PYR-GCK)).